The primary structure comprises 295 residues: Indole-3-glycerol phosphate synthase (295 aa).

Belongs to the TrpC family.

It carries out the reaction 1-(2-carboxyphenylamino)-1-deoxy-D-ribulose 5-phosphate + H(+) = (1S,2R)-1-C-(indol-3-yl)glycerol 3-phosphate + CO2 + H2O. Its pathway is amino-acid biosynthesis; L-tryptophan biosynthesis; L-tryptophan from chorismate: step 4/5. The chain is Indole-3-glycerol phosphate synthase from Prochlorococcus marinus (strain MIT 9301).